We begin with the raw amino-acid sequence, 374 residues long: Ribosomal RNA large subunit methyltransferase G (374 aa).

It belongs to the methyltransferase superfamily. RlmG family.

The protein resides in the cytoplasm. It carries out the reaction guanosine(1835) in 23S rRNA + S-adenosyl-L-methionine = N(2)-methylguanosine(1835) in 23S rRNA + S-adenosyl-L-homocysteine + H(+). Functionally, specifically methylates the guanine in position 1835 (m2G1835) of 23S rRNA. This chain is Ribosomal RNA large subunit methyltransferase G, found in Pseudomonas putida (strain GB-1).